Here is a 659-residue protein sequence, read N- to C-terminus: DNA ligase (659 aa).

NAD(+) contacts are provided by residues 32–36 (DAEYD), 81–82 (SL), and E110. Catalysis depends on K112, which acts as the N6-AMP-lysine intermediate. 4 residues coordinate NAD(+): R133, E168, K284, and K308. The Zn(2+) site is built by C402, C405, C420, and C425. The 78-residue stretch at 582–659 (AKPQIFAGKS…SEEEFAELLP (78 aa)) folds into the BRCT domain.

This sequence belongs to the NAD-dependent DNA ligase family. LigA subfamily. It depends on Mg(2+) as a cofactor. Requires Mn(2+) as cofactor.

The enzyme catalyses NAD(+) + (deoxyribonucleotide)n-3'-hydroxyl + 5'-phospho-(deoxyribonucleotide)m = (deoxyribonucleotide)n+m + AMP + beta-nicotinamide D-nucleotide.. DNA ligase that catalyzes the formation of phosphodiester linkages between 5'-phosphoryl and 3'-hydroxyl groups in double-stranded DNA using NAD as a coenzyme and as the energy source for the reaction. It is essential for DNA replication and repair of damaged DNA. In Desulfitobacterium hafniense (strain DSM 10664 / DCB-2), this protein is DNA ligase.